The following is a 389-amino-acid chain: UDP-D-apiose/UDP-D-xylose synthase 1 (389 aa).

6 residues coordinate NAD(+): F28, I29, D49, N76, I77, and L96. The UDP-alpha-D-glucuronate site is built by Y105, T139, E141, R182, and Y185. 2 residues coordinate NAD(+): Y185 and K189. Y185 serves as the catalytic Proton acceptor. Residue N214 participates in UDP-alpha-D-glucuronate binding. 2 residues coordinate NAD(+): W215 and R235. Residues K251, V253, R260, Y331, Y335, D337, and R341 each contribute to the UDP-alpha-D-glucuronate site.

It belongs to the NAD(P)-dependent epimerase/dehydratase family. As to quaternary structure, homodimer and heterodimer with AXS2. The cofactor is NAD(+). In terms of tissue distribution, widely expressed with stronger expression in leaves and stems, and lower levels in flowers, siliques, pistils, pollen and roots.

The protein resides in the cytoplasm. It catalyses the reaction UDP-alpha-D-glucuronate + H(+) = UDP-alpha-D-xylose + CO2. It carries out the reaction UDP-alpha-D-glucuronate + H(+) = UDP-alpha-D-apiose + CO2. Inhibited by UDP-D-galacturonate. Together with AXS2, catalyzes the conversion of UDP-D-glucuronate into a mixture of UDP-D-apiose (UDP-Api) as the main product and UDP-D-xylose to a lesser extent, via a cycle of oxidation and reduction. D-Apiose (3-C-hydroxymethyl-d-erythrose) is the only plant cell wall monosaccharide with a branched carbon skeleton and is found in rhamnogalacturonan II (RG-II), apiogalacturonan, and several apioglycosides. The protein is UDP-D-apiose/UDP-D-xylose synthase 1 of Arabidopsis thaliana (Mouse-ear cress).